Reading from the N-terminus, the 151-residue chain is Large ribosomal subunit protein bL9 (151 aa).

The protein belongs to the bacterial ribosomal protein bL9 family.

In terms of biological role, binds to the 23S rRNA. This Francisella philomiragia subsp. philomiragia (strain ATCC 25017 / CCUG 19701 / FSC 153 / O#319-036) protein is Large ribosomal subunit protein bL9.